The chain runs to 100 residues: Urease subunit gamma (100 aa).

It belongs to the urease gamma subunit family. As to quaternary structure, heterotrimer of UreA (gamma), UreB (beta) and UreC (alpha) subunits. Three heterotrimers associate to form the active enzyme.

Its subcellular location is the cytoplasm. It catalyses the reaction urea + 2 H2O + H(+) = hydrogencarbonate + 2 NH4(+). Its pathway is nitrogen metabolism; urea degradation; CO(2) and NH(3) from urea (urease route): step 1/1. In Saccharophagus degradans (strain 2-40 / ATCC 43961 / DSM 17024), this protein is Urease subunit gamma.